We begin with the raw amino-acid sequence, 98 residues long: Dehydrogenase acuH (98 aa).

The protein operates within secondary metabolite biosynthesis. In terms of biological role, dehydrogenase; part of the gene cluster that mediates the biosynthesis of aculins. The pathway begins with the synthesis of 6-methylsalicylic acid by the polyketide synthase (PKS) acuA via condensation of acetate and malonate units. The 6-methylsalicylic acid decarboxylase acuB then catalyzes the decarboxylation of 6-methylsalicylic acid to yield m-cresol (also known as 3-methylphenol). These first reactions occur in the cytosol. The intermediate m-cresol is then transported into the endoplasmic reticulum where the cytochrome P450 monooxygenase acuC converts it to m-hydroxybenzyl alcohol, which is further converted to gentisyl alcohol by the cytochrome P450 monooxygenase acuD. Gentisyl alcohol is further oxidized by the oxidoreductase acuE that probably catalyzes hydroxylation of the aromatic ring. The aromatic system might then be opened by oxidation through a Baeyer-Villiger type of oxidation, which could be catalyzed by acuF, with the carboxylic acid at C-1 subsequently reduced to an aldehyde by acuG. Subsequently, a hemiacetal is formed, before the dehydrogenase acuH would reduce the double bond between C-4 and C-6. Finally, keto-enol tautomerism results in formation of aculinic acid, which exists as two diastereomers (both R/S configurations at C-1) by non-enzymatic hemiacetal formation. The carboxypeptidase acuI could be involved in the linking of aculinic acid to an aculene A moiety produced by the aculene biosynthesis cluster and which leads to the production of aculin A. AcuI may also be involved in the attachment of proline to aculinic acid to form epi-aculins A and B. In Aspergillus aculeatus (strain ATCC 16872 / CBS 172.66 / WB 5094), this protein is Dehydrogenase acuH.